The chain runs to 205 residues: Probable peptidyl-tRNA hydrolase 2 (205 aa).

Polar residues predominate over residues 40–49 (YSSKNANKAS). The tract at residues 40–68 (YSSKNANKASNPEKESPVSVSNDEDSESE) is disordered. Phosphoserine is present on residues Ser65 and Ser79.

It belongs to the PTH2 family.

The enzyme catalyses an N-acyl-L-alpha-aminoacyl-tRNA + H2O = an N-acyl-L-amino acid + a tRNA + H(+). The natural substrate for this enzyme may be peptidyl-tRNAs which drop off the ribosome during protein synthesis. This is Probable peptidyl-tRNA hydrolase 2 from Schizosaccharomyces pombe (strain 972 / ATCC 24843) (Fission yeast).